Here is a 159-residue protein sequence, read N- to C-terminus: Ribosomal RNA large subunit methyltransferase H (159 aa).

Residues Leu76, Gly108, and 127 to 132 (FSKMTF) contribute to the S-adenosyl-L-methionine site.

The protein belongs to the RNA methyltransferase RlmH family. In terms of assembly, homodimer.

The protein resides in the cytoplasm. It carries out the reaction pseudouridine(1915) in 23S rRNA + S-adenosyl-L-methionine = N(3)-methylpseudouridine(1915) in 23S rRNA + S-adenosyl-L-homocysteine + H(+). Specifically methylates the pseudouridine at position 1915 (m3Psi1915) in 23S rRNA. The sequence is that of Ribosomal RNA large subunit methyltransferase H from Geobacillus sp. (strain WCH70).